Consider the following 181-residue polypeptide: Mating-type protein A1 (181 aa).

Residues 122 to 181 (DKKKRRHIPESSKELLEKAFKVKRFPNSKERERIARECGISPLQVRVWFTNKRARSKSRA) constitute a DNA-binding region (homeobox).

Belongs to the MATA1 family.

It is found in the nucleus. In terms of biological role, mating type proteins are sequence specific DNA-binding proteins that act as master switches in yeast differentiation by controlling gene expression in a cell type-specific fashion. The chain is Mating-type protein A1 (MATA1) from Pichia angusta (Yeast).